Reading from the N-terminus, the 227-residue chain is Mitochondrial inner membrane protease ATP23 (227 aa).

His-124 provides a ligand contact to a divalent metal cation. Residue Glu-125 is part of the active site. An a divalent metal cation-binding site is contributed by His-128.

It belongs to the peptidase M76 family. In terms of assembly, interacts with ATP6.

It localises to the mitochondrion inner membrane. In terms of biological role, has a dual role in the assembly of mitochondrial ATPase. Acts as a protease that removes the N-terminal 10 residues of mitochondrial ATPase CF(0) subunit 6 (ATP6) at the intermembrane space side. Also involved in the correct assembly of the membrane-embedded ATPase CF(0) particle, probably mediating association of ATP6 with the subunit 9 ring. The chain is Mitochondrial inner membrane protease ATP23 (ATP23) from Saccharomyces cerevisiae (strain YJM789) (Baker's yeast).